Consider the following 725-residue polypeptide: Dynein axonemal assembly factor 1 (725 aa).

The segment at 1–91 is disordered; sequence MHPEPSEPAT…EDRGPRMTKS (91 aa). The span at 38 to 48 shows a compositional bias: basic and acidic residues; sequence GCKEEINDPKE. Over residues 53-67 the composition is skewed to polar residues; sequence SSDTSYHSQQKQSGD. The segment covering 76–86 has biased composition (basic and acidic residues); the sequence is HPREDREDRGP. 6 LRR repeats span residues 107-129, 130-151, 152-173, 174-195, 196-217, and 221-242; these read ALNDTLYLHFKGFDRIENLEEYT, GLRCLWLQSNGIQKIENLEAQT, ELRCLFLQMNLLRKIENLEPLQ, KLDALNLSNNYIKTIENLSCLP, VLNTLQMAHNHLETVEDIQHLQ, and RLCVLDLSHNKLSDPEILSILE. An LRRCT domain is found at 256 to 294; sequence PVIRQIPNYRRTVTVRLKHLTYLDDRPVFPKDRACAEAW. Positions 330–345 are enriched in basic and acidic residues; sequence RAEERKRQRESQERGE. A disordered region spans residues 330–513; sequence RAEERKRQRE…LGAAREEPTP (184 aa). At Ser-358 the chain carries Phosphoserine. Composition is skewed to basic and acidic residues over residues 360-408 and 481-491; these read EGKE…REDG and VKGEDGDREPE. Residue Thr-559 is modified to Phosphothreonine. Ser-562 and Ser-583 each carry phosphoserine. Positions 632-642 are enriched in basic and acidic residues; it reads DLEIRKQDTKS. Residues 632–703 form a disordered region; that stretch reads DLEIRKQDTK…AATPPETCVG (72 aa).

It belongs to the DNAAF1 family. In terms of tissue distribution, mainly expressed in trachea and testis.

The protein resides in the cell projection. The protein localises to the cilium. It localises to the cytoplasm. It is found in the cytoskeleton. Its subcellular location is the spindle pole. Its function is as follows. Cilium-specific protein required for the stability of the ciliary architecture. Plays a role in cytoplasmic preassembly of dynein arms. Involved in regulation of microtubule-based cilia and actin-based brush border microvilli. This chain is Dynein axonemal assembly factor 1 (DNAAF1), found in Homo sapiens (Human).